Here is a 670-residue protein sequence, read N- to C-terminus: DNA ligase (670 aa).

NAD(+) is bound by residues 32-36 (DSEYD), 81-82 (SL), and Glu114. Lys116 functions as the N6-AMP-lysine intermediate in the catalytic mechanism. 4 residues coordinate NAD(+): Arg137, Glu174, Lys291, and Lys315. Cys409, Cys412, Cys427, and Cys433 together coordinate Zn(2+). A BRCT domain is found at 592 to 670 (ASENLFKDKT…EEEFLAQITR (79 aa)).

It belongs to the NAD-dependent DNA ligase family. LigA subfamily. Mg(2+) is required as a cofactor. Requires Mn(2+) as cofactor.

The catalysed reaction is NAD(+) + (deoxyribonucleotide)n-3'-hydroxyl + 5'-phospho-(deoxyribonucleotide)m = (deoxyribonucleotide)n+m + AMP + beta-nicotinamide D-nucleotide.. Its function is as follows. DNA ligase that catalyzes the formation of phosphodiester linkages between 5'-phosphoryl and 3'-hydroxyl groups in double-stranded DNA using NAD as a coenzyme and as the energy source for the reaction. It is essential for DNA replication and repair of damaged DNA. The chain is DNA ligase from Haemophilus influenzae (strain ATCC 51907 / DSM 11121 / KW20 / Rd).